The primary structure comprises 193 residues: MSTLYHTCDKIEQRIIWIDCEMTGLDVEKQTLCEIALIVTDSELNTIATGPDIVIHQPKEVLDNMEEWPRNTFHENGLMEKIIASKYSMADAENEVIDFLKLHALPGKSPIAGNSIYMDRLFIKKYMPKLDKFAHYRCIDVSTIKGLVQRWYPDYKHPKKQCTHRAFDDIMESIAELKNYRESIFVKSTASSF.

One can recognise an Exonuclease domain in the interval 15 to 177 (IIWIDCEMTG…DDIMESIAEL (163 aa)). Y136 is a catalytic residue.

This sequence belongs to the oligoribonuclease family.

3'-to-5' exoribonuclease specific for small oligoribonucleotides. This Caenorhabditis elegans protein is Probable oligoribonuclease.